The following is a 316-amino-acid chain: Probable cell division protein WhiA (316 aa).

The segment at residues 275 to 309 (TLKELGEMVESGKISKSGINHRLRKLDQIAEQLRN) is a DNA-binding region (H-T-H motif).

This sequence belongs to the WhiA family.

Involved in cell division and chromosome segregation. This chain is Probable cell division protein WhiA, found in Bacillus pumilus (strain SAFR-032).